The primary structure comprises 496 residues: Probable malate:quinone oxidoreductase (496 aa).

Belongs to the MQO family. FAD serves as cofactor.

It carries out the reaction (S)-malate + a quinone = a quinol + oxaloacetate. It participates in carbohydrate metabolism; tricarboxylic acid cycle; oxaloacetate from (S)-malate (quinone route): step 1/1. This chain is Probable malate:quinone oxidoreductase, found in Prochlorococcus marinus (strain NATL1A).